The chain runs to 363 residues: tRNA N6-adenosine threonylcarbamoyltransferase (363 aa).

Fe cation contacts are provided by histidine 121 and histidine 125. Substrate is bound by residues leucine 143–glycine 147, aspartate 176, glycine 189, and asparagine 287. Aspartate 315 provides a ligand contact to Fe cation.

It belongs to the KAE1 / TsaD family. Fe(2+) is required as a cofactor.

It localises to the cytoplasm. It catalyses the reaction L-threonylcarbamoyladenylate + adenosine(37) in tRNA = N(6)-L-threonylcarbamoyladenosine(37) in tRNA + AMP + H(+). Functionally, required for the formation of a threonylcarbamoyl group on adenosine at position 37 (t(6)A37) in tRNAs that read codons beginning with adenine. Is involved in the transfer of the threonylcarbamoyl moiety of threonylcarbamoyl-AMP (TC-AMP) to the N6 group of A37, together with TsaE and TsaB. TsaD likely plays a direct catalytic role in this reaction. The sequence is that of tRNA N6-adenosine threonylcarbamoyltransferase from Rhodopseudomonas palustris (strain HaA2).